The chain runs to 90 residues: uncharacterized protein (90 aa).

A disordered region spans residues 25 to 90 (GEAAYNSPTN…PPIAPPPILD (66 aa)). Polar residues-rich tracts occupy residues 30 to 54 (NSPTNNQKSQGTNSSFGDTSPTESV) and 65 to 79 (NDQTSIGNSDTSNVN).

This is an uncharacterized protein from Bacillus subtilis (strain 168).